The primary structure comprises 138 residues: 1,4-dihydroxy-2-naphthoyl-CoA hydrolase (138 aa).

Residue Asp13 is part of the active site.

Belongs to the 4-hydroxybenzoyl-CoA thioesterase family. DHNA-CoA hydrolase subfamily.

It catalyses the reaction 1,4-dihydroxy-2-naphthoyl-CoA + H2O = 1,4-dihydroxy-2-naphthoate + CoA + H(+). The protein operates within cofactor biosynthesis; phylloquinone biosynthesis. Its pathway is quinol/quinone metabolism; 1,4-dihydroxy-2-naphthoate biosynthesis; 1,4-dihydroxy-2-naphthoate from chorismate: step 7/7. In terms of biological role, catalyzes the hydrolysis of 1,4-dihydroxy-2-naphthoyl-CoA (DHNA-CoA) to 1,4-dihydroxy-2-naphthoate (DHNA), a reaction involved in phylloquinone (vitamin K1) biosynthesis. The sequence is that of 1,4-dihydroxy-2-naphthoyl-CoA hydrolase from Microcystis aeruginosa (strain NIES-843 / IAM M-2473).